A 156-amino-acid chain; its full sequence is Crossover junction endodeoxyribonuclease RuvC (156 aa).

Active-site residues include Asp7, Glu66, and Asp138. Mg(2+)-binding residues include Asp7, Glu66, and Asp138.

This sequence belongs to the RuvC family. In terms of assembly, homodimer which binds Holliday junction (HJ) DNA. The HJ becomes 2-fold symmetrical on binding to RuvC with unstacked arms; it has a different conformation from HJ DNA in complex with RuvA. In the full resolvosome a probable DNA-RuvA(4)-RuvB(12)-RuvC(2) complex forms which resolves the HJ. The cofactor is Mg(2+).

The protein resides in the cytoplasm. The enzyme catalyses Endonucleolytic cleavage at a junction such as a reciprocal single-stranded crossover between two homologous DNA duplexes (Holliday junction).. The RuvA-RuvB-RuvC complex processes Holliday junction (HJ) DNA during genetic recombination and DNA repair. Endonuclease that resolves HJ intermediates. Cleaves cruciform DNA by making single-stranded nicks across the HJ at symmetrical positions within the homologous arms, yielding a 5'-phosphate and a 3'-hydroxyl group; requires a central core of homology in the junction. The consensus cleavage sequence is 5'-(A/T)TT(C/G)-3'. Cleavage occurs on the 3'-side of the TT dinucleotide at the point of strand exchange. HJ branch migration catalyzed by RuvA-RuvB allows RuvC to scan DNA until it finds its consensus sequence, where it cleaves and resolves the cruciform DNA. In Ehrlichia canis (strain Jake), this protein is Crossover junction endodeoxyribonuclease RuvC.